The sequence spans 166 residues: Minor capsid protein VP2 (166 aa).

The segment at 138–166 (PAPSGFVNPNYQPSPPRLKLGPRPPSTNV) is disordered. A compositionally biased stretch (pro residues) spans 149-166 (QPSPPRLKLGPRPPSTNV).

Belongs to the vesivirus VP2 protein family. In terms of assembly, homooligomer. The portal-like structure consists in 12 copies of VP2. Interacts with capsid protein VP1.

It is found in the virion. It localises to the host cytoplasm. Functionally, minor structural protein that forms a portal-like structure at a unique three-fold axis of symmetry, following binding to the host receptor. The channel formed by VP2 may allow the delivery of the viral genome through the host endosomal membrane. The sequence is that of Minor capsid protein VP2 from Homo sapiens (Human).